Here is a 489-residue protein sequence, read N- to C-terminus: uncharacterized protein (489 aa).

T26 carries the phosphothreonine modification. A Phosphoserine modification is found at S27. Helical transmembrane passes span 63-83 (IVYL…IEFA), 182-202 (LVWS…ILCA), and 221-241 (VFKL…IAFL). 3 disordered regions span residues 260-312 (PKTS…APLE), 401-435 (STLL…VPPS), and 450-489 (PSIN…PVVH). Position 263 is a phosphoserine (S263). Residues 268–282 (QRGTSSSQPSENDAN) are compositionally biased toward polar residues. The segment covering 450–465 (PSINNVGGSTAPSVNN) has biased composition (polar residues). The span at 477-489 (SRSSTLTERPVVH) shows a compositional bias: low complexity.

The protein localises to the endoplasmic reticulum membrane. This is an uncharacterized protein from Schizosaccharomyces pombe (strain 972 / ATCC 24843) (Fission yeast).